The primary structure comprises 432 residues: Homogentisate 1,2-dioxygenase (432 aa).

Catalysis depends on H286, which acts as the Proton acceptor. 2 residues coordinate Fe cation: H329 and E335. Positions 344 and 365 each coordinate homogentisate. H365 lines the Fe cation pocket.

It belongs to the homogentisate dioxygenase family. Hexamer; dimer of trimers. Requires Fe cation as cofactor.

It carries out the reaction homogentisate + O2 = 4-maleylacetoacetate + H(+). It functions in the pathway amino-acid degradation; L-phenylalanine degradation; acetoacetate and fumarate from L-phenylalanine: step 4/6. Involved in the catabolism of homogentisate (2,5-dihydroxyphenylacetate or 2,5-OH-PhAc), a central intermediate in the degradation of phenylalanine and tyrosine. Catalyzes the oxidative ring cleavage of the aromatic ring of homogentisate to yield maleylacetoacetate. The sequence is that of Homogentisate 1,2-dioxygenase from Bordetella petrii (strain ATCC BAA-461 / DSM 12804 / CCUG 43448).